The chain runs to 421 residues: Imidazolonepropionase (421 aa).

Positions 81 and 83 each coordinate Fe(3+). Zn(2+)-binding residues include His-81 and His-83. 3 residues coordinate 4-imidazolone-5-propanoate: Arg-90, Tyr-153, and His-186. Residue Tyr-153 participates in N-formimidoyl-L-glutamate binding. His-251 serves as a coordination point for Fe(3+). Residue His-251 participates in Zn(2+) binding. Residue Glu-254 coordinates 4-imidazolone-5-propanoate. Asp-326 contributes to the Fe(3+) binding site. Residue Asp-326 coordinates Zn(2+). Residues Asn-328 and Gly-330 each coordinate N-formimidoyl-L-glutamate. Residue Ser-331 participates in 4-imidazolone-5-propanoate binding.

It belongs to the metallo-dependent hydrolases superfamily. HutI family. It depends on Zn(2+) as a cofactor. The cofactor is Fe(3+).

The protein resides in the cytoplasm. It catalyses the reaction 4-imidazolone-5-propanoate + H2O = N-formimidoyl-L-glutamate. It functions in the pathway amino-acid degradation; L-histidine degradation into L-glutamate; N-formimidoyl-L-glutamate from L-histidine: step 3/3. Functionally, catalyzes the hydrolytic cleavage of the carbon-nitrogen bond in imidazolone-5-propanoate to yield N-formimidoyl-L-glutamate. It is the third step in the universal histidine degradation pathway. The protein is Imidazolonepropionase of Streptococcus pyogenes serotype M2 (strain MGAS10270).